The primary structure comprises 697 residues: MADTPSVAVQAPPGYGKTELFHLPLIALASKGDVEYVSFLFVPYTVLLANCMIRLGRCGCLNVAPVRNFIEEGCDGVTDLYVGIYDDLASTNFTDRIAAWENIVECTFRTNNVKLGYLIVDELHNFETEVYRQSQFGGITNLDFDAFEKAIFLSGTAPEAVADAALQRIGLTGLAKKSMDINELKRSEDLSRGLSSYPTRMFNLIKEKSKVPLGTNATTTASTNVRTSATTTASINVRTSATTTASINVRTSATTTESTNSNTNATTTESTNSSTNATTTASTNSSTNATTTESTNASAKEDANKDGNAEDNRFHPVTDINKEPYKRKGSQMVLLERKKLKAQFPNTSENMNVLQFLGFRSDEIKHLFLYGIDIYFCPEGVFTQYGLCKGCQKMFELCVCWAGQKVSYRRMAWEALAVERMLRNDEEYKEYLEDIEPYHGDPVGYLKFFSVKRREIYSQIQRNYAWYLAITRRRETISVLDSTRGKQGSQVFRMSGRQIKELYYKVWSNLRESKTEVLQYFLNWDEKKCQEEWEAKDDTVFVEALEKVGVFQRLRSMTSAGLQGPQYVKLQFSRHHRQLRSRYELSLGMHLRDQLALGVTPSKVPHWTAFLSMLIGLFYNKTFRQKLEYLLEQISEVWLLPHWLDLANVEVLAADNTRVPLYMLMVAVHKELDSDDVPDGRFDIILLCRDSSREVGE.

14 helical membrane-spanning segments follow: residues Pro65–Tyr85, Cys106–Phe126, Tyr131–Ile151, Asp163–Glu183, Leu194–Gly214, Thr227–Ile247, Ser286–Asp306, Pro316–Glu336, Ser361–Val381, Met394–Glu414, Glu419–His439, Ser450–Ile470, Gln487–Trp507, and Thr558–Gln578. The segment at Ser246–Asn321 is disordered. A compositionally biased stretch (low complexity) spans Thr251 to Ser298. A compositionally biased stretch (basic and acidic residues) spans Ala299–Asn321.

The protein localises to the membrane. This is an uncharacterized protein from Saccharomyces cerevisiae (strain ATCC 204508 / S288c) (Baker's yeast).